The primary structure comprises 702 residues: Polyribonucleotide nucleotidyltransferase (702 aa).

Residues aspartate 493 and aspartate 499 each contribute to the Mg(2+) site. The KH domain occupies proline 560 to isoleucine 619. The 69-residue stretch at glycine 629–lysine 697 folds into the S1 motif domain.

This sequence belongs to the polyribonucleotide nucleotidyltransferase family. As to quaternary structure, component of the RNA degradosome, which is a multiprotein complex involved in RNA processing and mRNA degradation. Mg(2+) is required as a cofactor.

The protein resides in the cytoplasm. It carries out the reaction RNA(n+1) + phosphate = RNA(n) + a ribonucleoside 5'-diphosphate. Functionally, involved in mRNA degradation. Catalyzes the phosphorolysis of single-stranded polyribonucleotides processively in the 3'- to 5'-direction. The chain is Polyribonucleotide nucleotidyltransferase from Halorhodospira halophila (strain DSM 244 / SL1) (Ectothiorhodospira halophila (strain DSM 244 / SL1)).